Here is a 553-residue protein sequence, read N- to C-terminus: Glutamate--tRNA ligase (553 aa).

The 'HIGH' region motif lies at 41–51 (PSPTGFQHIGG). A 'KMSKS' region motif is present at residues 293-297 (KLSKR). Residue lysine 296 participates in ATP binding.

It belongs to the class-I aminoacyl-tRNA synthetase family. Glutamate--tRNA ligase type 1 subfamily. In terms of assembly, monomer.

It localises to the cytoplasm. The enzyme catalyses tRNA(Glu) + L-glutamate + ATP = L-glutamyl-tRNA(Glu) + AMP + diphosphate. Its function is as follows. Catalyzes the attachment of glutamate to tRNA(Glu) in a two-step reaction: glutamate is first activated by ATP to form Glu-AMP and then transferred to the acceptor end of tRNA(Glu). This Clostridium beijerinckii (strain ATCC 51743 / NCIMB 8052) (Clostridium acetobutylicum) protein is Glutamate--tRNA ligase.